The sequence spans 193 residues: Oocyte-secreted protein 3 (193 aa).

Residues 1 to 22 form the signal peptide; that stretch reads MKDFVRLQSSFLLCTILTLSEQ. Asn64, Asn130, Asn148, Asn151, Asn165, and Asn178 each carry an N-linked (GlcNAc...) asparagine glycan.

It belongs to the PLAC1 family.

The protein localises to the secreted. The protein is Oocyte-secreted protein 3 of Homo sapiens (Human).